A 315-amino-acid chain; its full sequence is MTEKIVVIVGPTEVGKTKLGIALAKKLGGEIISGDSMQIYKGMDIGTAKVKPDEMEGVPHHLLDIKEPCEPFSVVEFQRLARALITDISARGRLPIIVGGTGLYIQAAIYDYRFSDAPSDEAYRRALRQLAAEQGAEALHEQLKAVDPESAARIHPNNVRRVIRALEVYHCTGKPFSEWQRGQQRQLLYETALIGLTAERSVLYRRINERVDEMIAEGLIEEVRSLYDRGLRDCQAVQAIGYKELYDYFDGRVSLDEAIEQLKQNSRRYAKRQLTWFRNQMPVEWFDMTDPEKFAVKVEEIFRYIAGKLRLEANI.

10 to 17 (GPTEVGKT) is a binding site for ATP. 12 to 17 (TEVGKT) contacts substrate. Residues 35 to 38 (DSMQ) are interaction with substrate tRNA.

The protein belongs to the IPP transferase family. Monomer. Mg(2+) is required as a cofactor.

It catalyses the reaction adenosine(37) in tRNA + dimethylallyl diphosphate = N(6)-dimethylallyladenosine(37) in tRNA + diphosphate. Catalyzes the transfer of a dimethylallyl group onto the adenine at position 37 in tRNAs that read codons beginning with uridine, leading to the formation of N6-(dimethylallyl)adenosine (i(6)A). This chain is tRNA dimethylallyltransferase, found in Geobacillus thermodenitrificans (strain NG80-2).